A 286-amino-acid polypeptide reads, in one-letter code: Protein PXR1 (286 aa).

The interval 1–20 (MGLAGTKVKQRFGLDPRNTS) is disordered. In terms of domain architecture, G-patch spans 25–71 (KSRFGHRYLESMGWAPGKGLGLVEHATTTHVKVSVKDDTVGLGAKLA). The interval 148–255 (EDESEVNFKS…PRKHDQISNV (108 aa)) is disordered. Over residues 168–198 (PSRDSTSHAKRMRGDESKKSTRDQSKQERKE) the composition is skewed to basic and acidic residues. Residues 199–230 (KKIKTEKKEKKEKKEKKEKKEKKEKKEKKEKK) are compositionally biased toward basic residues.

This sequence belongs to the PINX1 family.

It is found in the nucleus. It localises to the nucleolus. Its function is as follows. Involved in rRNA-processing at A0, A1 and A2 sites and negatively regulates telomerase. This Meyerozyma guilliermondii (strain ATCC 6260 / CBS 566 / DSM 6381 / JCM 1539 / NBRC 10279 / NRRL Y-324) (Yeast) protein is Protein PXR1 (PXR1).